A 1378-amino-acid chain; its full sequence is Macrophage-stimulating protein receptor (1378 aa).

The N-terminal stretch at 1 to 23 is a signal peptide; sequence MGLPLPLLQSSLLLMLLLRLSAA. Topologically, residues 25–960 are extracellular; that stretch reads TNLNWQCPRI…RSSPGRASQR (936 aa). The region spanning 33–524 is the Sema domain; the sequence is RIPYAASRDF…SGDQVFKVPI (492 aa). Residue Asn91 is glycosylated (N-linked (GlcNAc...) asparagine). 7 cysteine pairs are disulfide-bonded: Cys102–Cys105, Cys108–Cys163, Cys136–Cys144, Cys175–Cys178, Cys301–Cys368, Cys386–Cys409, and Cys387–Cys424. Residues Asn391, Asn460, and Asn490 are each glycosylated (N-linked (GlcNAc...) asparagine). 4 disulfide bridges follow: Cys529-Cys547, Cys535-Cys569, Cys538-Cys554, and Cys550-Cys560. IPT/TIG domains follow at residues 571 to 673, 686 to 769, and 772 to 864; these read PEIS…FRVE, PVLT…FHYK, and PIVL…FRFL. N-linked (GlcNAc...) asparagine glycosylation is found at Asn656, Asn722, Asn845, and Asn901. A helical membrane pass occupies residues 961-981; sequence ILLIALLVLILLVAVLAVALI. Topologically, residues 982–1378 are cytoplasmic; sequence FNSRRRKKQL…RPLSEPPLPT (397 aa). The segment at 1002-1026 is disordered; sequence SDINDTASGAPNHEESSESRDGTSV. Basic and acidic residues predominate over residues 1013-1022; it reads NHEESSESRD. The 264-residue stretch at 1059 to 1322 folds into the Protein kinase domain; sequence IHTDQVIGKG…ALVLEVKQVV (264 aa). Residues 1065–1073, Lys1091, and 1138–1141 contribute to the ATP site; these read IGKGHFGVV and LPYM. Residue Asp1185 is the Proton acceptor of the active site. Arg1189 contacts ATP. A phosphotyrosine; by autocatalysis mark is found at Tyr1215, Tyr1216, Tyr1330, and Tyr1337. The disordered stretch occupies residues 1347-1378; that stretch reads DGSVPPEQVQPSPQHCRSTSKPRPLSEPPLPT. Residues 1349-1360 show a composition bias toward low complexity; that stretch reads SVPPEQVQPSPQ.

Belongs to the protein kinase superfamily. Tyr protein kinase family. In terms of assembly, heterodimer of an alpha chain and a beta chain which are disulfide linked. Binds PLXNB1. Associates with and is negatively regulated by HYAL2. Interacts when phosphorylated with downstream effectors including PIK3R1, PCLG1, GRB2 and GAB1. Interacts with integrin beta1/ITGB1 in a ligand-independent fashion. Isoform sf-Stk forms covalent heterodimers with friend spleen focus-forming virus (FSFFV) gp55. In terms of processing, proteolytic processing yields the two subunits. Post-translationally, autophosphorylated in response to ligand binding on Tyr-1215 and Tyr-1216 in the kinase domain leading to further phosphorylation of Tyr-1330 and Tyr-1337 in the C-terminal multifunctional docking site. Ubiquitinated. Ubiquitination by CBL regulates the receptor stability and activity through proteasomal degradation. In terms of processing, O-mannosylation of IPT/TIG domains on Thr or Ser residues by TMEM260 is required for protein maturation. O-mannosylated residues are composed of single mannose glycans that are not elongated or modified. As to expression, expressed in liver, skin, lung, brain, testis and kidney.

The protein localises to the membrane. The enzyme catalyses L-tyrosyl-[protein] + ATP = O-phospho-L-tyrosyl-[protein] + ADP + H(+). With respect to regulation, in its inactive state, the C-terminal tail interacts with the catalytic domain and inhibits the kinase activity. Upon ligand binding, the C-terminal tail is displaced and becomes phosphorylated, thus increasing the kinase activity. Receptor tyrosine kinase that transduces signals from the extracellular matrix into the cytoplasm by binding to MST1 ligand. Regulates many physiological processes including cell survival, migration and differentiation. Ligand binding at the cell surface induces autophosphorylation of RON on its intracellular domain that provides docking sites for downstream signaling molecules. Following activation by ligand, interacts with the PI3-kinase subunit PIK3R1, PLCG1 or the adapter GAB1. Recruitment of these downstream effectors by RON leads to the activation of several signaling cascades including the RAS-ERK, PI3 kinase-AKT, or PLCgamma-PKC. RON signaling activates the wound healing response by promoting epithelial cell migration, proliferation as well as survival at the wound site. Also plays a role in the innate immune response by regulating the migration and phagocytic activity of macrophages. Alternatively, RON can also promote signals such as cell migration and proliferation in response to growth factors other than MST1 ligand. The chain is Macrophage-stimulating protein receptor (Mst1r) from Mus musculus (Mouse).